Here is a 92-residue protein sequence, read N- to C-terminus: Small ribosomal subunit protein uS19 (92 aa).

Belongs to the universal ribosomal protein uS19 family.

Protein S19 forms a complex with S13 that binds strongly to the 16S ribosomal RNA. The protein is Small ribosomal subunit protein uS19 of Shewanella putrefaciens (strain CN-32 / ATCC BAA-453).